Here is a 499-residue protein sequence, read N- to C-terminus: Trichoplein keratin filament-binding protein (499 aa).

The stretch at 12–38 forms a coiled coil; the sequence is SRVRTLEQQLVRQREQEARLRRQWEQH. Disordered stretches follow at residues 46–78 and 169–209; these read DVRS…EEKQ and VQQQ…EEEN. A compositionally biased stretch (polar residues) spans 50-67; it reads SKQAQWSSRQSFHRSMSA. Basic and acidic residues-rich tracts occupy residues 69–78 and 172–209; these read QRDRMREEKQ and QEKK…EEEN. Coiled-coil stretches lie at residues 71-133, 168-306, and 359-484; these read DRMR…ERRK, QVQQ…ALLE, and WEKR…MIRQ. Positions 74–499 are interaction with keratin proteins; that stretch reads REEKQRKLEE…IHSRPRSAWT (426 aa). Positions 260 to 426 are trichohyalin/plectin homology domain; sequence KMMEESRRKT…RLTLRLEKEQ (167 aa).

It belongs to the TCHP family.

The protein resides in the cytoplasm. Its subcellular location is the cytoskeleton. It localises to the microtubule organizing center. It is found in the centrosome. In terms of biological role, may act as a 'capping' or 'branching' protein for keratin filaments in the cell periphery. May regulate K8/K18 filament and desmosome organization mainly at the apical or peripheral regions of simple epithelial cells. This chain is Trichoplein keratin filament-binding protein, found in Danio rerio (Zebrafish).